The chain runs to 536 residues: Metal transporter Nramp2 (536 aa).

Residues 1 to 37 form a disordered region; it reads MSSPSGGEDSKDDEKDEESNRLLPLSSSSQSQSLQSE. Residues 22 to 36 are compositionally biased toward low complexity; sequence LLPLSSSSQSQSLQS. A glycan (N-linked (GlcNAc...) asparagine) is linked at N38. The next 12 helical transmembrane spans lie at 76 to 96, 104 to 124, 161 to 181, 185 to 205, 213 to 233, 259 to 279, 305 to 325, 347 to 367, 400 to 420, 435 to 455, 465 to 485, and 492 to 512; these read LWLF…PGNL, AIAG…GLLI, VALI…IQIL, FLPL…FLFL, LEGV…WMCG, AVGV…SALV, VALF…AKGF, YGGG…AAGQ, SFAI…EASL, IPFA…MGVF, AWTI…DFFI, and LFGF…IYLV.

Belongs to the NRAMP (TC 2.A.55) family.

Its subcellular location is the membrane. In terms of biological role, probable divalent metal transporter. The chain is Metal transporter Nramp2 from Populus trichocarpa (Western balsam poplar).